A 482-amino-acid chain; its full sequence is tRNA sulfurtransferase (482 aa).

Positions 61 to 165 constitute a THUMP domain; sequence LAIRDALTRI…DDRLLLIKGR (105 aa). Residues 183–184, K265, G287, and Q296 each bind ATP; that span reads LI. The cysteines at positions 344 and 456 are disulfide-linked. In terms of domain architecture, Rhodanese spans 404 to 482; that stretch reads FGPNDVILDI…GFANVKVYRP (79 aa). The active-site Cysteine persulfide intermediate is the C456.

This sequence belongs to the ThiI family.

The protein localises to the cytoplasm. The catalysed reaction is [ThiI sulfur-carrier protein]-S-sulfanyl-L-cysteine + a uridine in tRNA + 2 reduced [2Fe-2S]-[ferredoxin] + ATP + H(+) = [ThiI sulfur-carrier protein]-L-cysteine + a 4-thiouridine in tRNA + 2 oxidized [2Fe-2S]-[ferredoxin] + AMP + diphosphate. The enzyme catalyses [ThiS sulfur-carrier protein]-C-terminal Gly-Gly-AMP + S-sulfanyl-L-cysteinyl-[cysteine desulfurase] + AH2 = [ThiS sulfur-carrier protein]-C-terminal-Gly-aminoethanethioate + L-cysteinyl-[cysteine desulfurase] + A + AMP + 2 H(+). Its pathway is cofactor biosynthesis; thiamine diphosphate biosynthesis. Functionally, catalyzes the ATP-dependent transfer of a sulfur to tRNA to produce 4-thiouridine in position 8 of tRNAs, which functions as a near-UV photosensor. Also catalyzes the transfer of sulfur to the sulfur carrier protein ThiS, forming ThiS-thiocarboxylate. This is a step in the synthesis of thiazole, in the thiamine biosynthesis pathway. The sulfur is donated as persulfide by IscS. This chain is tRNA sulfurtransferase, found in Salmonella heidelberg (strain SL476).